Reading from the N-terminus, the 1118-residue chain is Cytospin-A (1118 aa).

The segment at 1–176 is disordered; it reads MKKASRSVGS…SKSKSDNQIS (176 aa). Polar residues predominate over residues 29 to 52; the sequence is ESGSSLSAVTKLSKPGTSASLLKT. Over residues 79–119 the composition is skewed to low complexity; that stretch reads STCASTVSSTTGTTMSTLENKPRTVAGSTARRSTSSGTKES. Composition is skewed to basic and acidic residues over residues 120–131 and 158–171; these read SSSRERIRDRSR and TNPE…KSKS. A coiled-coil region spans residues 193-281; it reads KTKDVEILHL…LNALGFSLEQ (89 aa). Disordered stretches follow at residues 299-324 and 359-391; these read ITAG…GSME and SSDD…NASE. Over residues 359-373 the composition is skewed to low complexity; that stretch reads SSDDALDAPSSSESE. 2 coiled-coil regions span residues 396–450 and 488–808; these read CLTE…MESL and RYME…RGRV. Disordered regions lie at residues 856–879 and 921–1002; these read PSPA…PPAA and TSST…RKDP. Low complexity predominate over residues 937-946; sequence ESAKSISVSR. Residues 947–957 are compositionally biased toward basic and acidic residues; the sequence is RSSEEIKRDIS. Positions 972-991 are enriched in low complexity; it reads TTSPQLSLSSSPTASVTPTT. Residues 1012-1117 enclose the Calponin-homology (CH) domain; that stretch reads GSKRNALLKW…YVTAIYKYFE (106 aa).

This sequence belongs to the cytospin-A family. As to quaternary structure, may interact with both microtubules and actin cytoskeleton.

The protein resides in the cytoplasm. Its subcellular location is the cytoskeleton. It localises to the spindle. The protein localises to the cell junction. It is found in the gap junction. Functionally, involved in cytokinesis and spindle organization. May play a role in actin cytoskeleton organization and microtubule stabilization and hence required for proper cell adhesion and migration. The chain is Cytospin-A (SPECC1L) from Gallus gallus (Chicken).